Here is a 195-residue protein sequence, read N- to C-terminus: Probable GTP-binding protein EngB (195 aa).

The EngB-type G domain maps to 22–194 (LKGEVAFVGR…LDLISTLLKE (173 aa)). Residues 30 to 37 (GRSNVGKS), 56 to 60 (GKTRS), 74 to 77 (DLPG), 141 to 144 (TKMD), and 173 to 175 (TSS) contribute to the GTP site. Residues Ser-37 and Thr-58 each coordinate Mg(2+).

It belongs to the TRAFAC class TrmE-Era-EngA-EngB-Septin-like GTPase superfamily. EngB GTPase family. It depends on Mg(2+) as a cofactor.

In terms of biological role, necessary for normal cell division and for the maintenance of normal septation. The protein is Probable GTP-binding protein EngB of Thermotoga sp. (strain RQ2).